The sequence spans 351 residues: Dihydroorotate dehydrogenase (quinone) (351 aa).

FMN-binding positions include 61-65 (AGLDK) and Thr-85. Lys-65 contacts substrate. 110 to 114 (NRMGF) is a binding site for substrate. Residues Asn-139 and Asn-172 each contribute to the FMN site. Asn-172 is a binding site for substrate. Ser-175 functions as the Nucleophile in the catalytic mechanism. Position 177 (Asn-177) interacts with substrate. Lys-217 and Thr-245 together coordinate FMN. 246-247 (NT) contributes to the substrate binding site. FMN contacts are provided by residues Gly-268, Gly-297, and 318-319 (YS).

It belongs to the dihydroorotate dehydrogenase family. Type 2 subfamily. In terms of assembly, monomer. FMN is required as a cofactor.

It localises to the cell membrane. It carries out the reaction (S)-dihydroorotate + a quinone = orotate + a quinol. The protein operates within pyrimidine metabolism; UMP biosynthesis via de novo pathway; orotate from (S)-dihydroorotate (quinone route): step 1/1. In terms of biological role, catalyzes the conversion of dihydroorotate to orotate with quinone as electron acceptor. The sequence is that of Dihydroorotate dehydrogenase (quinone) from Xanthomonas campestris pv. campestris (strain 8004).